We begin with the raw amino-acid sequence, 220 residues long: Avenin-3 (220 aa).

The signal sequence occupies residues 1–19 (MKTFLIFALLAMAATMATA). Position 20 is a pyrrolidone carboxylic acid (glutamine 20). Tandem repeats lie at residues 41-48 (QQMLLQQQ) and 49-56 (QQMLLQQQ). Residues 41 to 56 (QQMLLQQQQQMLLQQQ) form a 2 X 8 AA tandem repeats of Q-Q-M-L-L-Q-Q-Q region. 4 cysteine pairs are disulfide-bonded: cysteine 69–cysteine 202, cysteine 77–cysteine 96, cysteine 103–cysteine 104, and cysteine 116–cysteine 210. The 2-1 repeat unit spans residues 128-137 (MQQQQFFQPQ). The tract at residues 128–146 (MQQQQFFQPQMQQQFFQPQ) is 2 X 10 AA tandem repeats of M-Q-Q-Q-Q-F-F-Q-P-Q. The stretch at 138–146 (MQQQFFQPQ) is one 2-2; approximate repeat.

The protein belongs to the gliadin/glutenin family. As to quaternary structure, monomer.

It localises to the vacuole. In terms of biological role, seed storage protein. Serves as a source of nitrogen, carbon, and sulfur for the young developing seedling. The sequence is that of Avenin-3 from Avena sativa (Oat).